The following is a 93-amino-acid chain: Integration host factor subunit beta (93 aa).

The protein belongs to the bacterial histone-like protein family. Heterodimer of an alpha and a beta chain.

Functionally, this protein is one of the two subunits of integration host factor, a specific DNA-binding protein that functions in genetic recombination as well as in transcriptional and translational control. This is Integration host factor subunit beta from Rhodospirillum centenum (strain ATCC 51521 / SW).